Consider the following 436-residue polypeptide: Hydrogenobyrinate a,c-diamide synthase (436 aa).

Positions Arg-244–Ala-435 constitute a GATase cobBQ-type domain. Cys-327 (nucleophile) is an active-site residue.

The protein belongs to the CobB/CbiA family. The cofactor is Mg(2+).

It carries out the reaction hydrogenobyrinate + 2 L-glutamine + 2 ATP + 2 H2O = hydrogenobyrinate a,c-diamide + 2 L-glutamate + 2 ADP + 2 phosphate + 2 H(+). The protein operates within cofactor biosynthesis; adenosylcobalamin biosynthesis; cob(II)yrinate a,c-diamide from precorrin-2 (aerobic route): step 9/10. In terms of biological role, catalyzes the ATP-dependent amidation of the two carboxylate groups at positions a and c of hydrogenobyrinate, using either L-glutamine or ammonia as the nitrogen source. This chain is Hydrogenobyrinate a,c-diamide synthase, found in Brucella suis biovar 1 (strain 1330).